The primary structure comprises 175 residues: Ribonuclease M5 (175 aa).

The region spanning Asn-3–Ser-83 is the Toprim domain. Mg(2+)-binding residues include Glu-9, Asp-57, and Asp-59.

This sequence belongs to the ribonuclease M5 family. Mg(2+) serves as cofactor.

Its subcellular location is the cytoplasm. The catalysed reaction is Endonucleolytic cleavage of RNA, removing 21 and 42 nucleotides, respectively, from the 5'- and 3'-termini of a 5S-rRNA precursor.. In terms of biological role, required for correct processing of both the 5' and 3' ends of 5S rRNA precursor. Cleaves both sides of a double-stranded region yielding mature 5S rRNA in one step. The protein is Ribonuclease M5 of Mesoplasma florum (strain ATCC 33453 / NBRC 100688 / NCTC 11704 / L1) (Acholeplasma florum).